Here is a 790-residue protein sequence, read N- to C-terminus: Cadherin-6 (790 aa).

The signal sequence occupies residues 1 to 18; sequence MRTYRYFLLLFWVGQPYP. A propeptide spanning residues 19 to 53 is cleaved from the precursor; the sequence is TFSTPLSKRTSGFPAKKRTLELSGNSKNELSRSKR. 5 Cadherin domains span residues 54–159, 160–268, 269–383, 384–486, and 487–608; these read SWMW…EPIF, TKEV…PPRF, PQST…PPVF, SKLA…DNPP, and EFAE…LVHP. Topologically, residues 54-615 are extracellular; it reads SWMWNQFFLL…VHPTGLSTGA (562 aa). An N-linked (GlcNAc...) asparagine glycan is attached at Asn-255. The interval 261–291 is disordered; it reads VNDNPPRFPQSTYQFKTPESSPPGTPIGRIK. Polar residues predominate over residues 269-279; it reads PQSTYQFKTPE. N-linked (GlcNAc...) asparagine glycosylation is found at Asn-399, Asn-437, Asn-455, and Asn-536. The helical transmembrane segment at 616-636 threads the bilayer; that stretch reads LIAILLCIVTLLVTVVLFAAL. At 637-790 the chain is on the cytoplasmic side; that stretch reads RRQRKKEPLI…YGGVDSDKDS (154 aa). A phosphoserine mark is found at Ser-786 and Ser-790.

The protein resides in the cell membrane. Functionally, cadherins are calcium-dependent cell adhesion proteins. They preferentially interact with themselves in a homophilic manner in connecting cells; cadherins may thus contribute to the sorting of heterogeneous cell types. The sequence is that of Cadherin-6 (CDH6) from Bos taurus (Bovine).